A 312-amino-acid chain; its full sequence is Olfactory receptor-like protein COR6 (312 aa).

Over 1 to 26 the chain is Extracellular; the sequence is MASGNCTTPTTFILSGLTDNPGLQMP. N-linked (GlcNAc...) asparagine glycosylation is present at Asn-5. A helical membrane pass occupies residues 27-49; the sequence is LFMVFLAIYTITLLTNLGLIALI. Over 50 to 57 the chain is Cytoplasmic; that stretch reads SIDLQLQT. Residues 58-79 traverse the membrane as a helical segment; the sequence is PMYIFLQNLSFTDAVYSTVITP. Topologically, residues 80-100 are extracellular; it reads KMLATFLEETKTISYVGCILQ. Cys-97 and Cys-179 are joined by a disulfide. Residues 101 to 120 form a helical membrane-spanning segment; the sequence is YFSFVLLTVRECLLLAVMAY. At 121–139 the chain is on the cytoplasmic side; it reads DRYAAICKPLLYPAIMTKA. A helical membrane pass occupies residues 140–164; sequence VCWRLVKGLYSLAFLNFLVHTSGLL. Topologically, residues 165–205 are extracellular; sequence KLSFCSSNVVNHFFCDNSPLFQISSSSTALNELLVFIFGSL. Residues 206-226 form a helical membrane-spanning segment; it reads FVMSSIITILISYVFIILTVV. Topologically, residues 227 to 239 are cytoplasmic; sequence RIRSKERKYKAFS. The helical transmembrane segment at 240–260 threads the bilayer; it reads TCTSHLMAVSLFHGTIVFMYF. Over 261-271 the chain is Extracellular; it reads QPANNFSLDKD. Residues 272–292 form a helical membrane-spanning segment; sequence KIMSLFYTVVIPMLNPLIYSW. Residues 293–312 lie on the Cytoplasmic side of the membrane; the sequence is RNKEVKDALHRAIATAVLFH.

Belongs to the G-protein coupled receptor 1 family.

Its subcellular location is the cell membrane. Functionally, odorant receptor. The chain is Olfactory receptor-like protein COR6 (COR6) from Gallus gallus (Chicken).